Consider the following 265-residue polypeptide: Mlc titration factor A (265 aa).

Residues His111, His148, His152, and Glu211 each contribute to the Zn(2+) site.

Belongs to the MtfA family. As to quaternary structure, interacts with Mlc. It depends on Zn(2+) as a cofactor.

It is found in the cytoplasm. Involved in the modulation of the activity of the glucose-phosphotransferase system (glucose-PTS). Interacts with the transcriptional repressor Mlc, preventing its interaction with DNA and leading to the modulation of expression of genes regulated by Mlc, including ptsG, which encodes the PTS system glucose-specific EIICB component. In terms of biological role, shows zinc-dependent metallopeptidase activity. The polypeptide is Mlc titration factor A (Escherichia fergusonii (strain ATCC 35469 / DSM 13698 / CCUG 18766 / IAM 14443 / JCM 21226 / LMG 7866 / NBRC 102419 / NCTC 12128 / CDC 0568-73)).